The sequence spans 141 residues: Lutropin subunit beta (141 aa).

A signal peptide spans 1–20 (MEMLQGLLLLLLLSMGGAWA). 6 disulfides stabilise this stretch: C29/C77, C43/C92, C46/C130, C54/C108, C58/C110, and C113/C120. N33 and N50 each carry an N-linked (GlcNAc...) asparagine glycan.

It belongs to the glycoprotein hormones subunit beta family. Heterodimer of a common alpha chain and a unique beta chain which confers biological specificity to thyrotropin, lutropin, follitropin and gonadotropin.

The protein localises to the secreted. In terms of biological role, promotes spermatogenesis and ovulation by stimulating the testes and ovaries to synthesize steroids. The protein is Lutropin subunit beta (LHB) of Gorilla gorilla gorilla (Western lowland gorilla).